Here is a 784-residue protein sequence, read N- to C-terminus: ATP-dependent zinc metalloprotease FTSH 9, chloroplastic/mitochondrial (784 aa).

Low complexity-rich tracts occupy residues 1 to 12 (MSALQASLLLRP), 24 to 34 (PLPSSSASFPR), and 42 to 53 (PLPLRALASEGP). The transit peptide at 1–47 (MSALQASLLLRPLPSPLPPRRRLPLPSSSASFPRAGHHRRLPLPLRA) directs the protein to the chloroplast and mitochondrion. Residues 1 to 71 (MSALQASLLL…DPPPPELPAA (71 aa)) are disordered. The span at 54–69 (QPAPSPAPDPPPPELP) shows a compositional bias: pro residues. The next 2 membrane-spanning stretches (helical) occupy residues 104–124 (WVLA…DWVV) and 267–287 (IFST…GAAA). Residue 368–375 (GSPGTGKT) participates in ATP binding. Position 601 (His601) interacts with Zn(2+). Glu602 is a catalytic residue. His605 and Asp679 together coordinate Zn(2+).

It in the N-terminal section; belongs to the AAA ATPase family. This sequence in the C-terminal section; belongs to the peptidase M41 family. It depends on Zn(2+) as a cofactor.

The protein localises to the mitochondrion membrane. Its subcellular location is the plastid. It is found in the chloroplast thylakoid membrane. Probable ATP-dependent zinc metallopeptidase. The chain is ATP-dependent zinc metalloprotease FTSH 9, chloroplastic/mitochondrial (FTSH9) from Oryza sativa subsp. japonica (Rice).